We begin with the raw amino-acid sequence, 695 residues long: Solute carrier family 53 member 1 (695 aa).

At 1 to 228 the chain is on the cytoplasmic side; the sequence is MKFAEHLSAH…RVPPLGAAQP (228 aa). The 223-residue stretch at 2–224 folds into the SPX domain; that stretch reads KFAEHLSAHI…MKRLRVPPLG (223 aa). The tract at residues 158–165 is important for inositol polyphosphate binding; it reads KILKKHDK. Residues 229-259 form a helical membrane-spanning segment; it reads APAWTTFRVGLFCGIFIVLNITLVFAAVFKL. Residues 260–264 lie on the Extracellular side of the membrane; it reads ETDRT. Residues 265 to 296 form a helical membrane-spanning segment; that stretch reads VWPLIRIYRGGFLLIEFLFLLGINTYGWRQAG. The Cytoplasmic segment spans residues 297-309; it reads VNHVLIFELNPRN. Residues 310–337 traverse the membrane as a helical segment; that stretch reads NLSHQHLFEIAGFLGILWCLSLLACFFA. Residues 338–343 lie on the Extracellular side of the membrane; the sequence is PISIIP. A helical membrane pass occupies residues 344 to 365; the sequence is IYVYPLALYGFMVFFLINPTKT. The segment at residues 366-383 is an intramembrane region (helical); the sequence is FYYKSRFWLLKLLFRVFT. Topologically, residues 384 to 388 are cytoplasmic; it reads APFHK. The discontinuously helical transmembrane segment at 389-422 threads the bilayer; the sequence is VGFADFWLADQLNSLSVILMDLEYMICFYSFELK. Phosphate-binding residues include Asp-398 and Asn-401. Over 423–429 the chain is Extracellular; sequence WDESKGL. A discontinuously helical membrane pass occupies residues 430-471; that stretch reads LPNDPQEPEFCHKYSYGVRAIVQCIPAWLRFIQCLRRYRDTR. The EXS domain maps to 439 to 642; the sequence is FCHKYSYGVR…LNADDQTLLE (204 aa). Residue Arg-472 is a topological domain, cytoplasmic. A helical membrane pass occupies residues 473–503; the sequence is AFPHLVNAGKYSTTFFTVTFAALYSTHEEQN. The phosphate site is built by Lys-482 and Tyr-483. The Extracellular segment spans residues 504 to 506; sequence HSD. Residues 507-534 form a helical membrane-spanning segment; it reads TVVFFYLWVFFCIISSCYTLIWDLKMDW. Residues 535–553 lie on the Cytoplasmic side of the membrane; the sequence is GLFDKNAGENTFLREEIVY. A discontinuously helical membrane pass occupies residues 554 to 584; the sequence is PQKAYYYCAIIEDVILRFAWTIQISITATFK. Arg-570 serves as a coordination point for phosphate. The Extracellular portion of the chain corresponds to 585–586; it reads PH. The helical transmembrane segment at 587–625 threads the bilayer; sequence VGNIIATVFAPLEVFRRFVWNFFRLENEHLNNCGEFRAV. Arg-602 and Arg-603 together coordinate phosphate. Topologically, residues 626–695 are cytoplasmic; that stretch reads RDISVAPLNA…IEDTDDEANT (70 aa). Ser-667 carries the post-translational modification Phosphoserine. A disordered region spans residues 671 to 695; sequence PRLASQSKARDTKVLIEDTDDEANT. Thr-689 carries the phosphothreonine modification.

It belongs to the SYG1 (TC 2.A.94) family. In terms of assembly, homodimer. Expressed in pancreatic islets.

The protein localises to the cell membrane. The enzyme catalyses phosphate(in) = phosphate(out). Its function is as follows. Inorganic ion transporter that mediates phosphate ion export across plasma membrane. Plays a major role in phosphate homeostasis, preventing intracellular phosphate accumulation and possible calcium phosphate precipitation, ultimately preserving calcium signaling. Binds inositol hexakisphosphate (Ins6P) and similar inositol polyphosphates, such as 5-diphospho-inositol pentakisphosphate (5-InsP7), which are important intracellular signaling molecules involved in regulation of phosphate flux. (Microbial infection) Receptor for xenotropic and polytropic murine leukemia (X- and P-MLV) retroviruses. Confers susceptibility to X- or P-MLV infection in vitro. The protein is Solute carrier family 53 member 1 of Mus musculus (Mouse).